We begin with the raw amino-acid sequence, 226 residues long: Urease accessory protein UreF (226 aa).

Belongs to the UreF family. In terms of assembly, ureD, UreF and UreG form a complex that acts as a GTP-hydrolysis-dependent molecular chaperone, activating the urease apoprotein by helping to assemble the nickel containing metallocenter of UreC. The UreE protein probably delivers the nickel.

It localises to the cytoplasm. Its function is as follows. Required for maturation of urease via the functional incorporation of the urease nickel metallocenter. This is Urease accessory protein UreF from Paraburkholderia xenovorans (strain LB400).